A 255-amino-acid polypeptide reads, in one-letter code: Menaquinol:cytochrome c reductase cytochrome c subunit (255 aa).

The next 3 membrane-spanning stretches (helical) occupy residues 46 to 62 (WMVG…LTIV), 104 to 124 (VVGA…APFL), and 137 to 157 (VAVG…WQSV). One can recognise a Cytochrome c domain in the interval 178-253 (DTNAEGYKVF…ELAKFISETT (76 aa)). Heme c is bound by residues C192, C195, and H196.

This sequence belongs to the cytochrome b family. The main subunits of the menaquinol:cytochrome c complex are a Rieske-type iron-sulfur protein (QcrA), a cytochrome b (QcrB) and a cytochrome c (QcrC). The cofactor is heme c.

The protein localises to the cell membrane. Component of the menaquinol:cytochrome c reductase complex. The chain is Menaquinol:cytochrome c reductase cytochrome c subunit (qcrC) from Bacillus subtilis (strain 168).